A 508-amino-acid chain; its full sequence is MEEFQRYFELNRYQQHNFLYPLIFQEYIAALAHDHGLNRSILLENTGYGNKFSLLSVKRLITQMYQQNHLIISANDSSQNQFFGHNKNLYSQMISEGFAVIVEIPFSLRLRSSLEGKEIVKSQNLQSIHSIFPFLEDKFLHLNYVLDILIPYPIHLEILVQTLRHWVKDASSLHLLRFFLHEYRNWNSLITPKKTSSSFSKRNQRLFFFLYNSHVCEYESIFIFILSQSSHLRSTSSGALLERIYFYGKIEHSVEVFAKDFPSILCLLKDPFIHYLRYQGKSILASKGTPLLMNKWKYYLVNSWQCHFYVWSQSRRIYINQLSNHFLDFLGYLSSVRLNPSMVRSQMLENSFLIDNAIKKFETIVPIIPLIGSLAKAKFCNVLGHPISKPVWADLSDSDIIDRFGRICRNLSHYHSGSSKKKSLYRIKYILRLSCARTLARKHKSTVRAFLKMKRVGSELLEKFFTEEEQVFSLTFPRVSSTSTSRGLYRRRIWYLDIICINDLANHE.

The protein belongs to the intron maturase 2 family. MatK subfamily.

The protein localises to the plastid. The protein resides in the chloroplast. In terms of biological role, usually encoded in the trnK tRNA gene intron. Probably assists in splicing its own and other chloroplast group II introns. This chain is Maturase K, found in Huidobria chilensis (Loasa chilensis).